The following is a 290-amino-acid chain: Acetyl-coenzyme A carboxylase carboxyl transferase subunit beta (290 aa).

A CoA carboxyltransferase N-terminal domain is found at 28–290; sequence IMTKCPKCKK…TGGEYEWLQD (263 aa). The Zn(2+) site is built by Cys-32, Cys-35, Cys-51, and Cys-54. Residues 32–54 form a C4-type zinc finger; the sequence is CPKCKKIMLTKELDKNLRVCMNC.

This sequence belongs to the AccD/PCCB family. Acetyl-CoA carboxylase is a heterohexamer composed of biotin carboxyl carrier protein (AccB), biotin carboxylase (AccC) and two subunits each of ACCase subunit alpha (AccA) and ACCase subunit beta (AccD). Zn(2+) serves as cofactor.

The protein localises to the cytoplasm. It catalyses the reaction N(6)-carboxybiotinyl-L-lysyl-[protein] + acetyl-CoA = N(6)-biotinyl-L-lysyl-[protein] + malonyl-CoA. It participates in lipid metabolism; malonyl-CoA biosynthesis; malonyl-CoA from acetyl-CoA: step 1/1. In terms of biological role, component of the acetyl coenzyme A carboxylase (ACC) complex. Biotin carboxylase (BC) catalyzes the carboxylation of biotin on its carrier protein (BCCP) and then the CO(2) group is transferred by the transcarboxylase to acetyl-CoA to form malonyl-CoA. The chain is Acetyl-coenzyme A carboxylase carboxyl transferase subunit beta from Bacillus velezensis (strain DSM 23117 / BGSC 10A6 / LMG 26770 / FZB42) (Bacillus amyloliquefaciens subsp. plantarum).